The chain runs to 524 residues: 11-oxo-beta-amyrin 30-oxidase (524 aa).

A helical transmembrane segment spans residues 9 to 29 (GTTVIISVLSVLLAVIPWYLL). A heme-binding site is contributed by cysteine 472.

It belongs to the cytochrome P450 family. Heme serves as cofactor. In terms of tissue distribution, expressed in flowers. Detected in roots upon salt treatment.

It is found in the membrane. It carries out the reaction 11-oxo-beta-amyrin + 3 reduced [NADPH--hemoprotein reductase] + 3 O2 = glycyrrhetinate + 3 oxidized [NADPH--hemoprotein reductase] + 4 H2O + 4 H(+). Involved in the biosynthesis of triterpenoid saponins. Catalyzes three sequential oxidation steps at C-30 of 11-oxo-beta-amyrin. Also able to catalyze sequential C-30 hydroxylation of beta-amyrin to produce 30-hydroxy-beta-amyrin and 11-deoxoglycyrrhetinic acid. The polypeptide is 11-oxo-beta-amyrin 30-oxidase (CYP72A63) (Medicago truncatula (Barrel medic)).